The following is a 55-amino-acid chain: Protein CADMIUM TOLERANCE 1 (55 aa).

A helical transmembrane segment spans residues 24–40; the sequence is GCLYACIFTALCCFCCY.

The protein belongs to the CYSTM1 family.

Its subcellular location is the cell membrane. The protein localises to the secreted. It is found in the cell wall. In terms of biological role, confers resistance to heavy metal ions (e.g. cadmium (CdCl(2)) and copper (CuCl(2))) by chelating them at the plasma membrane of root cells, thus stopping their entry and reducing their accumulation. The polypeptide is Protein CADMIUM TOLERANCE 1 (Echinochloa crus-galli subsp. caudata (Cockspur)).